The sequence spans 348 residues: UDP-glucose 4-epimerase (348 aa).

Residues 12–14, 33–37, 66–67, Phe88, and Lys92 each bind NAD(+); these read GYI, DNFHN, and DI. A substrate-binding site is contributed by 132 to 134; it reads SAT. Catalysis depends on Tyr157, which acts as the Proton acceptor. The NAD(+) site is built by Lys161 and Tyr185. Residues 185–187, 206–208, 224–226, Arg239, and 300–303 each bind substrate; these read YFN, NNL, NVF, and REGD.

This sequence belongs to the NAD(P)-dependent epimerase/dehydratase family. Homodimer. It depends on NAD(+) as a cofactor.

It catalyses the reaction UDP-alpha-D-glucose = UDP-alpha-D-galactose. The catalysed reaction is UDP-N-acetyl-alpha-D-glucosamine = UDP-N-acetyl-alpha-D-galactosamine. Its pathway is carbohydrate metabolism; galactose metabolism. Its function is as follows. Catalyzes two distinct but analogous reactions: the reversible epimerization of UDP-glucose to UDP-galactose and the reversible epimerization of UDP-N-acetylglucosamine to UDP-N-acetylgalactosamine. The reaction with UDP-Gal plays a critical role in the Leloir pathway of galactose catabolism in which galactose is converted to the glycolytic intermediate glucose 6-phosphate. It contributes to the catabolism of dietary galactose and enables the endogenous biosynthesis of both UDP-Gal and UDP-GalNAc when exogenous sources are limited. Both UDP-sugar interconversions are important in the synthesis of glycoproteins and glycolipids. The protein is UDP-glucose 4-epimerase of Bos taurus (Bovine).